We begin with the raw amino-acid sequence, 302 residues long: Large ribosomal subunit protein uL4m (302 aa).

The protein belongs to the universal ribosomal protein uL4 family. In terms of assembly, component of the mitochondrial ribosome large subunit (39S) which comprises a 16S rRNA and about 50 distinct proteins.

The protein localises to the mitochondrion. The sequence is that of Large ribosomal subunit protein uL4m (mrpl4) from Danio rerio (Zebrafish).